The primary structure comprises 460 residues: Phosphomethylpyrimidine synthase (460 aa).

Residues asparagine 80, methionine 109, tyrosine 139, histidine 175, 195–197 (SRG), 236–239 (DSLR), and glutamate 275 contribute to the substrate site. Residue histidine 279 participates in Zn(2+) binding. Tyrosine 302 serves as a coordination point for substrate. Histidine 343 serves as a coordination point for Zn(2+). Cysteine 423, cysteine 426, and cysteine 431 together coordinate [4Fe-4S] cluster.

The protein belongs to the ThiC family. [4Fe-4S] cluster serves as cofactor.

The catalysed reaction is 5-amino-1-(5-phospho-beta-D-ribosyl)imidazole + S-adenosyl-L-methionine = 4-amino-2-methyl-5-(phosphooxymethyl)pyrimidine + CO + 5'-deoxyadenosine + formate + L-methionine + 3 H(+). It participates in cofactor biosynthesis; thiamine diphosphate biosynthesis. Catalyzes the synthesis of the hydroxymethylpyrimidine phosphate (HMP-P) moiety of thiamine from aminoimidazole ribotide (AIR) in a radical S-adenosyl-L-methionine (SAM)-dependent reaction. This is Phosphomethylpyrimidine synthase from Microcystis aeruginosa (strain NIES-843 / IAM M-2473).